A 587-amino-acid chain; its full sequence is Aspartate--tRNA ligase (587 aa).

Glutamate 174 provides a ligand contact to L-aspartate. The tract at residues 198-201 (QITK) is aspartate. Arginine 220 is an L-aspartate binding site. ATP-binding positions include 220–222 (RDE) and glutamine 229. An L-aspartate-binding site is contributed by histidine 443. Glutamate 477 contacts ATP. Residue arginine 484 coordinates L-aspartate. Position 529-532 (529-532 (GLDR)) interacts with ATP.

This sequence belongs to the class-II aminoacyl-tRNA synthetase family. Type 1 subfamily. In terms of assembly, homodimer.

The protein localises to the cytoplasm. The enzyme catalyses tRNA(Asp) + L-aspartate + ATP = L-aspartyl-tRNA(Asp) + AMP + diphosphate. Functionally, catalyzes the attachment of L-aspartate to tRNA(Asp) in a two-step reaction: L-aspartate is first activated by ATP to form Asp-AMP and then transferred to the acceptor end of tRNA(Asp). The protein is Aspartate--tRNA ligase of Streptococcus pneumoniae (strain ATCC 700669 / Spain 23F-1).